The chain runs to 157 residues: Ubiquitin-like protein 4A (157 aa).

The region spanning 1–76 (MQLTVKALQG…LNLVVKPLEK (76 aa)) is the Ubiquitin-like domain. A Glycyl lysine isopeptide (Lys-Gly) (interchain with G-Cter in ubiquitin) cross-link involves residue lysine 48. Serine 90 bears the Phosphoserine mark. Residues 96-138 (WQLISKVLARHFSAADASRVLEQLQRDYQRSLSRLTLDDIERL) form a required and sufficient for interaction with BAG6 region.

In terms of assembly, component of the BAG6/BAT3 complex, at least composed of BAG6, UBL4A and GET4/TRC35. Interacts with BAG6; the interaction is direct and required for UBL4A protein stability. Interacts with USP13; may be indirect via BAG6. Polyubiquitinated. Ubiquitination by AMFR and deubiquitination by USP13 may regulate the interaction between the BAG6/BAT complex and SGTA and therefore may regulate client proteins fate.

It is found in the cytoplasm. It localises to the cytosol. The protein resides in the nucleus. In terms of biological role, as part of a cytosolic protein quality control complex, the BAG6/BAT3 complex, maintains misfolded and hydrophobic patches-containing proteins in a soluble state and participates in their proper delivery to the endoplasmic reticulum or alternatively can promote their sorting to the proteasome where they undergo degradation. The BAG6/BAT3 complex is involved in the post-translational delivery of tail-anchored/type II transmembrane proteins to the endoplasmic reticulum membrane. Recruited to ribosomes, it interacts with the transmembrane region of newly synthesized tail-anchored proteins and together with SGTA and ASNA1 mediates their delivery to the endoplasmic reticulum. Client proteins that cannot be properly delivered to the endoplasmic reticulum are ubiquitinated and sorted to the proteasome. Similarly, the BAG6/BAT3 complex also functions as a sorting platform for proteins of the secretory pathway that are mislocalized to the cytosol either delivering them to the proteasome for degradation or to the endoplasmic reticulum. The BAG6/BAT3 complex also plays a role in the endoplasmic reticulum-associated degradation (ERAD), a quality control mechanism that eliminates unwanted proteins of the endoplasmic reticulum through their retrotranslocation to the cytosol and their targeting to the proteasome. It maintains these retrotranslocated proteins in an unfolded yet soluble state condition in the cytosol to ensure their proper delivery to the proteasome. This is Ubiquitin-like protein 4A (UBL4A) from Plecturocebus moloch (Dusky titi monkey).